The chain runs to 194 residues: Imidazoleglycerol-phosphate dehydratase (194 aa).

The protein belongs to the imidazoleglycerol-phosphate dehydratase family.

Its subcellular location is the cytoplasm. It catalyses the reaction D-erythro-1-(imidazol-4-yl)glycerol 3-phosphate = 3-(imidazol-4-yl)-2-oxopropyl phosphate + H2O. It functions in the pathway amino-acid biosynthesis; L-histidine biosynthesis; L-histidine from 5-phospho-alpha-D-ribose 1-diphosphate: step 6/9. The chain is Imidazoleglycerol-phosphate dehydratase from Bacillus pumilus (strain SAFR-032).